Consider the following 328-residue polypeptide: MAMGEFDLIKRYFQQQILVDDSVQLSIGDDCALVSVPENYQLAITTDTMVENTHFLPTISPEDLAYKAVATNLSDLAAMGAQPKWVSLALTLPNVDENWISTFSQSLLHTLKQYNVTLIGGDTTKGNLSITITAQGFVEKNKGICRHKAQIGDLIYVSSTLGDSAAGLTQILLGKSAVDSDDVFLQQRHLRPTPRIELGQALIGIAHVAIDLSDGLISDLGHILERSQCSAEVELTALPLSSSILNKYDRTQAEQFALSGGEDYELCFTIPPEYKDELELRLKKLNVPCTCIGKINEKCGDFSPRFLRDGKPVNITFSSGFDHFKESK.

Residues Asp-30, Thr-45, Thr-46, and Asp-47 each coordinate Mg(2+). His-54 provides a ligand contact to substrate. Residues Asp-75 and Asp-122 each coordinate Mg(2+). ATP-binding positions include 121–122 and Arg-146; that span reads GD. Mg(2+) is bound at residue Asp-211. Ser-213 is an ATP binding site. Asp-214 contributes to the Mg(2+) binding site. Residues Glu-262 and Phe-321 each contribute to the substrate site.

The protein belongs to the thiamine-monophosphate kinase family.

The catalysed reaction is thiamine phosphate + ATP = thiamine diphosphate + ADP. Its pathway is cofactor biosynthesis; thiamine diphosphate biosynthesis; thiamine diphosphate from thiamine phosphate: step 1/1. In terms of biological role, catalyzes the ATP-dependent phosphorylation of thiamine-monophosphate (TMP) to form thiamine-pyrophosphate (TPP), the active form of vitamin B1. This is Thiamine-monophosphate kinase from Haemophilus influenzae (strain ATCC 51907 / DSM 11121 / KW20 / Rd).